The chain runs to 671 residues: DNA ligase (671 aa).

Residues 32 to 36 (DAEYD), 81 to 82 (SL), and glutamate 113 contribute to the NAD(+) site. The active-site N6-AMP-lysine intermediate is lysine 115. The NAD(+) site is built by arginine 136, glutamate 173, lysine 290, and lysine 314. Zn(2+)-binding residues include cysteine 408, cysteine 411, cysteine 426, and cysteine 432. One can recognise a BRCT domain in the interval 593–671 (EIDSPFAGKT…ETEMLRLLGS (79 aa)).

This sequence belongs to the NAD-dependent DNA ligase family. LigA subfamily. Requires Mg(2+) as cofactor. It depends on Mn(2+) as a cofactor.

The catalysed reaction is NAD(+) + (deoxyribonucleotide)n-3'-hydroxyl + 5'-phospho-(deoxyribonucleotide)m = (deoxyribonucleotide)n+m + AMP + beta-nicotinamide D-nucleotide.. DNA ligase that catalyzes the formation of phosphodiester linkages between 5'-phosphoryl and 3'-hydroxyl groups in double-stranded DNA using NAD as a coenzyme and as the energy source for the reaction. It is essential for DNA replication and repair of damaged DNA. The sequence is that of DNA ligase from Escherichia coli O1:K1 / APEC.